Here is a 203-residue protein sequence, read N- to C-terminus: NAD(P)H dehydrogenase (quinone) (203 aa).

The Flavodoxin-like domain occupies 3-194 (VLIVYYSMYG…AGARFQGRYV (192 aa)). FMN contacts are provided by residues 9–14 (SMYGHI) and 82–84 (TRF). Residue tyrosine 11 participates in NAD(+) binding. Substrate is bound at residue tryptophan 102. FMN is bound by residues 117–123 (SSATQHG) and histidine 138.

This sequence belongs to the WrbA family. The cofactor is FMN.

It carries out the reaction a quinone + NADH + H(+) = a quinol + NAD(+). The catalysed reaction is a quinone + NADPH + H(+) = a quinol + NADP(+). The protein is NAD(P)H dehydrogenase (quinone) of Geobacter sulfurreducens (strain ATCC 51573 / DSM 12127 / PCA).